We begin with the raw amino-acid sequence, 387 residues long: EARP-interacting protein homolog (387 aa).

4 WD repeats span residues 132-172, 182-222, 226-266, and 270-310; these read TAHG…TKSV, KGQL…QIYC, AHGQ…EPVK, and EHSH…SEPF. Residues 311-339 form a disordered region; it reads GHLVDDEDLSDQEDNPQEEKTKEPLQDSI. The span at 315-326 shows a compositional bias: acidic residues; that stretch reads DDEDLSDQEDNP. The WD 5 repeat unit spans residues 345–385; the sequence is EHEDSVYAVEWSSADPWLFASLSYDGRLVINRVPRALKYNI.

It belongs to the WD repeat EIPR1 family.

Its subcellular location is the golgi apparatus. It localises to the trans-Golgi network. In terms of biological role, may act as a component of endosomal retrieval machinery that is involved in protein transport from early endosomes to either recycling endosomes or the trans-Golgi network. The sequence is that of EARP-interacting protein homolog from Xenopus laevis (African clawed frog).